A 352-amino-acid polypeptide reads, in one-letter code: tRNA uridine(34) hydroxylase (352 aa).

Residues 144–238 (SDPDVILIDT…YLEEVPASDS (95 aa)) enclose the Rhodanese domain. Cys-198 (cysteine persulfide intermediate) is an active-site residue.

It belongs to the TrhO family.

It carries out the reaction uridine(34) in tRNA + AH2 + O2 = 5-hydroxyuridine(34) in tRNA + A + H2O. Catalyzes oxygen-dependent 5-hydroxyuridine (ho5U) modification at position 34 in tRNAs. The protein is tRNA uridine(34) hydroxylase of Psychrobacter cryohalolentis (strain ATCC BAA-1226 / DSM 17306 / VKM B-2378 / K5).